A 383-amino-acid polypeptide reads, in one-letter code: Transcription factor Y1 (383 aa).

HTH myb-type domains follow at residues 9 to 61 and 62 to 116; these read KVGL…INYL and RADV…SRQI. DNA-binding regions (H-T-H motif) lie at residues 37 to 61 and 89 to 112; these read WRSLPKNAGLLRCGKSCRLRWINYL and WSLIASHFPGRTDNEIKNYWNSHL. A disordered region spans residues 136–250; the sequence is SKLHSAEKRR…DATGPWELDP (115 aa). 2 stretches are compositionally biased toward low complexity: residues 155-170 and 191-207; these read KSSSANTTTNTTSSKT and ASSPPTAATTTSAASSP.

Its subcellular location is the nucleus. It participates in pigment biosynthesis. Functionally, transcription factor involved in regulating the biosynthetic pathway of flavan-4-ol-derived red phlobaphene and red-brown 3-deoxyanthocyanidin (3-DA) pigments. Regulates transcription of chalcone synthase, chalcone isomerase, dihydroflavonol reductase and flavonoid 3'-hydroxylase genes required for the phlobaphene and 3-DA biosynthesis. Transcription of these genes is activated in mesocotyls in response to ingress of non-pathogenic fungus C.heterostrophus. Regulates the production of 3-DA phytoalexins (luteolinidin, 5-methoxyluteolinidin, apigeninidin and 7-methoxyapigeninidin) in mesocotyls in response to C.heterostrophus and corn leaf aphid (CLA) R.maidis. Involved in resistance against anthracnose leaf blight (ALB) caused by the pathogenic C.sublineolum fungus by inducing the production of 3-DA phytoalexins. Confers resistance, also by inducing the production of 3-DA phytoalexins, against CLA R.maidis, which is an insect and a pest. The polypeptide is Transcription factor Y1 (Sorghum bicolor (Sorghum)).